The chain runs to 132 residues: Small ribosomal subunit protein eS24 (132 aa).

Over residues R90–K100 the composition is skewed to basic and acidic residues. Positions R90–D132 are disordered. A compositionally biased stretch (basic residues) spans K101–K121.

This sequence belongs to the eukaryotic ribosomal protein eS24 family. In terms of assembly, component of the small ribosomal subunit.

It localises to the cytoplasm. Component of the small ribosomal subunit. The ribosome is a large ribonucleoprotein complex responsible for the synthesis of proteins in the cell. Required for processing of pre-rRNA and maturation of 40S ribosomal subunits. The polypeptide is Small ribosomal subunit protein eS24 (rps24) (Takifugu rubripes (Japanese pufferfish)).